The sequence spans 506 residues: Dolichyl pyrophosphate Glc1Man9GlcNAc2 alpha-1,3-glucosyltransferase (506 aa).

Helical transmembrane passes span 10 to 30, 101 to 121, 133 to 153, 176 to 196, 219 to 239, 261 to 281, 305 to 325, 339 to 359, 384 to 401, 406 to 426, 454 to 474, and 479 to 499; these read RLLL…IPSS, VIYF…YGVY, NLIC…HIHF, LLGG…AVTA, LVTI…PFIY, YWAP…AVLL, PFAV…LLAI, GLVA…GWHV, HYFL…PLLY, YPIK…GFAA, YLMG…YFLG, and FLPL…SWIW.

This sequence belongs to the ALG6/ALG8 glucosyltransferase family.

The protein localises to the endoplasmic reticulum membrane. It carries out the reaction an alpha-D-Glc-(1-&gt;3)-alpha-D-Man-(1-&gt;2)-alpha-D-Man-(1-&gt;2)-alpha-D-Man-(1-&gt;3)-[alpha-D-Man-(1-&gt;2)-alpha-D-Man-(1-&gt;3)-[alpha-D-Man-(1-&gt;2)-alpha-D-Man-(1-&gt;6)]-alpha-D-Man-(1-&gt;6)]-beta-D-Man-(1-&gt;4)-beta-D-GlcNAc-(1-&gt;4)-alpha-D-GlcNAc-diphospho-di-trans,poly-cis-dolichol + a di-trans,poly-cis-dolichyl beta-D-glucosyl phosphate = an alpha-D-Glc-(1-&gt;3)-alpha-D-Glc-(1-&gt;3)-alpha-D-Man-(1-&gt;2)-alpha-D-Man-(1-&gt;2)-alpha-D-Man-(1-&gt;3)-[alpha-D-Man-(1-&gt;2)-alpha-D-Man-(1-&gt;3)-[alpha-D-Man-(1-&gt;2)-alpha-D-Man-(1-&gt;6)]-alpha-D-Man-(1-&gt;6)]-beta-D-Man-(1-&gt;4)-beta-D-GlcNAc-(1-&gt;4)-alpha-D-GlcNAc-diphospho-di-trans,poly-cis-dolichol + a di-trans,poly-cis-dolichyl phosphate + H(+). It functions in the pathway protein modification; protein glycosylation. Dolichyl pyrophosphate Glc1Man9GlcNAc2 alpha-1,3-glucosyltransferase that operates in the biosynthetic pathway of dolichol-linked oligosaccharides, the glycan precursors employed in protein asparagine (N)-glycosylation. The assembly of dolichol-linked oligosaccharides begins on the cytosolic side of the endoplasmic reticulum membrane and finishes in its lumen. The sequential addition of sugars to dolichol pyrophosphate produces dolichol-linked oligosaccharides containing fourteen sugars, including two GlcNAcs, nine mannoses and three glucoses. Once assembled, the oligosaccharide is transferred from the lipid to nascent proteins by oligosaccharyltransferases. In the lumen of the endoplasmic reticulum, adds the second glucose residue from dolichyl phosphate glucose (Dol-P-Glc) onto the lipid-linked oligosaccharide intermediate Glc(1)Man(9)GlcNAc(2)-PP-Dol to produce Glc(2)Man(9)GlcNAc(2)-PP-Dol. This is Dolichyl pyrophosphate Glc1Man9GlcNAc2 alpha-1,3-glucosyltransferase from Arabidopsis thaliana (Mouse-ear cress).